Consider the following 169-residue polypeptide: Endoribonuclease YbeY (169 aa).

3 residues coordinate Zn(2+): His117, His121, and His127.

It belongs to the endoribonuclease YbeY family. Zn(2+) serves as cofactor.

The protein localises to the cytoplasm. Its function is as follows. Single strand-specific metallo-endoribonuclease involved in late-stage 70S ribosome quality control and in maturation of the 3' terminus of the 16S rRNA. This is Endoribonuclease YbeY from Mesoplasma florum (strain ATCC 33453 / NBRC 100688 / NCTC 11704 / L1) (Acholeplasma florum).